The following is a 469-amino-acid chain: Septin homolog spn1 (469 aa).

Residues 1-58 (MASMVLADGMPTVKDDSTRSRGSDVDSFTSTDNVTQINVEAAISENKNEEKPIQDNSE) form a disordered region. The span at 13 to 24 (VKDDSTRSRGSD) shows a compositional bias: basic and acidic residues. The segment covering 26–38 (DSFTSTDNVTQIN) has biased composition (polar residues). In terms of domain architecture, Septin-type G spans 92–367 (QGFNFNVLVL…EAYRTERLLS (276 aa)). Residues 102–109 (GESGSGKS) are G1 motif. GTP-binding positions include 102-109 (GESGSGKS), Thr139, Gly165, 244-252 (KADTLTDDE), and Arg317. Residues 162–165 (DTPG) are G3 motif. The tract at residues 243-246 (AKAD) is G4 motif. The stretch at 383–469 (SAKLEEERAL…NEKSKRKFFK (87 aa)) forms a coiled coil.

Belongs to the TRAFAC class TrmE-Era-EngA-EngB-Septin-like GTPase superfamily. Septin GTPase family. As to quaternary structure, component of the septin complex composed of two copies of each spn1, spn2, spn3 and spn4.

It localises to the cytoplasm. Its subcellular location is the cell cortex. In terms of biological role, plays a role in the cell cycle. Involved in a late stage of septum formation leading to the separation of the daughter cells. The protein is Septin homolog spn1 (spn1) of Schizosaccharomyces pombe (strain 972 / ATCC 24843) (Fission yeast).